Reading from the N-terminus, the 239-residue chain is uncharacterized protein (239 aa).

One can recognise an HTH cro/C1-type domain in the interval 13–66 (IEYLVDKLNGPSEFARKTGVTLSTITRWRKGEADPSRSNLVKIAEVTGVSIEWL). Positions 24–43 (SEFARKTGVTLSTITRWRKG) form a DNA-binding region, H-T-H motif.

This is an uncharacterized protein from Haemophilus influenzae (strain ATCC 51907 / DSM 11121 / KW20 / Rd).